Reading from the N-terminus, the 318-residue chain is NADH-ubiquinone oxidoreductase chain 1 (318 aa).

The next 8 membrane-spanning stretches (helical) occupy residues 1–21 (MLPITNSLTYIIPILIAVAFL), 71–91 (LLILSPILALTTAMLIWTPIP), 101–121 (LGLLSILAISSMAVNSTLWAG), 145–165 (VTLGIILLSILILTGGFTMQL), 172–192 (HIWLLTTSWPLTMMWFISTLA), 224–244 (FFLAEYTNIISMNLLTCIMFI), 253–273 (ELFLINLVTKTLLLSLTFLWI), and 294–314 (LPLTMALCLLQASLLVSISGI).

Belongs to the complex I subunit 1 family.

It is found in the mitochondrion inner membrane. It catalyses the reaction a ubiquinone + NADH + 5 H(+)(in) = a ubiquinol + NAD(+) + 4 H(+)(out). Core subunit of the mitochondrial membrane respiratory chain NADH dehydrogenase (Complex I) that is believed to belong to the minimal assembly required for catalysis. Complex I functions in the transfer of electrons from NADH to the respiratory chain. The immediate electron acceptor for the enzyme is believed to be ubiquinone. The sequence is that of NADH-ubiquinone oxidoreductase chain 1 (MT-ND1) from Varanus rudicollis (Rough-necked monitor lizard).